A 60-amino-acid chain; its full sequence is Metallothionein B (60 aa).

Residues 1 to 28 (MDPCECTKSGTCNCGGSCTCTNCSCTSC) are beta. Residues Cys-4, Cys-6, Cys-12, Cys-14, Cys-18, Cys-20, Cys-23, Cys-25, Cys-28, Cys-32, Cys-33, Cys-35, Cys-36, Cys-40, Cys-43, Cys-47, Cys-49, Cys-54, Cys-58, and Cys-59 each coordinate a divalent metal cation. The interval 29–60 (KKSCCPCCPSGCTKCASGCVCKGKTCDTSCCQ) is alpha.

It belongs to the metallothionein superfamily. Type 1 family.

In terms of biological role, metallothioneins have a high content of cysteine residues that bind various heavy metals. This Chaenocephalus aceratus (Blackfin icefish) protein is Metallothionein B (mtb).